The chain runs to 452 residues: Putative zinc metalloprotease VC_2253 (452 aa).

A Zn(2+)-binding site is contributed by His22. The active site involves Glu23. Residue His26 coordinates Zn(2+). Residues 98–120 (SAIVSAGPIFNFLFAIFAYWLVF) form a helical membrane-spanning segment. One can recognise a PDZ domain in the interval 197–292 (NLRDWNFDPE…QVELTLIPDS (96 aa)). A run of 2 helical transmembrane segments spans residues 378–400 (FVYF…LVPL) and 428–447 (MGYR…AIFN).

Belongs to the peptidase M50B family. Zn(2+) serves as cofactor.

The protein localises to the cell inner membrane. This Vibrio cholerae serotype O1 (strain ATCC 39315 / El Tor Inaba N16961) protein is Putative zinc metalloprotease VC_2253.